The sequence spans 611 residues: Podocan (611 aa).

The N-terminal stretch at 1 to 23 (MAGSRGLPLLLLVLQLFLGPVLP) is a signal peptide. The region spanning 60–97 (PEPGPATVDCPRDCACSQEGVVDCGGIDLREFPGDLPE) is the LRRNT domain. LRR repeat units follow at residues 98-119 (HTNH…ELSR), 122-145 (RLET…AFEH), 148-169 (SLNY…LPNA), 170-190 (LISV…TFGQ), and 193-213 (NLRS…PDHM). N-linked (GlcNAc...) asparagine glycosylation occurs at Asn-215. 15 LRR repeats span residues 219 to 239 (NVEI…HLPP), 240 to 261 (ALYK…AFSE), 264 to 284 (NLRE…DNET), 290 to 311 (SLEY…LPRS), 312 to 332 (LVLL…VLTP), 335 to 358 (NLEY…AFQG), 361 to 382 (KLHT…LPRR), 383 to 403 (VRTL…DFAT), 406 to 427 (FLEE…RDAF), 432 to 453 (LLRS…LPKN), 477 to 490 (QLRE…RLRS), 503 to 523 (GLQL…GLPP), 524 to 545 (SLEY…AFDS), 548 to 569 (NLKG…ESAF), and 574 to 583 (HLQVLDIEGN). An N-linked (GlcNAc...) asparagine glycan is attached at Asn-282. A glycan (N-linked (GlcNAc...) asparagine) is linked at Asn-411. The disordered stretch occupies residues 585 to 611 (EFGNGSKDKDEEEEEEEEEEDEEEETR). A compositionally biased stretch (acidic residues) spans 594 to 611 (DEEEEEEEEEEDEEEETR).

This sequence belongs to the small leucine-rich proteoglycan (SLRP) family. SLRP class V subfamily. Binds to type I collagen. N-glycosylated. As to expression, kidney. Expressed in podocytes and likely vascular endothelial cells within the glomerulus.

The protein resides in the secreted. It is found in the extracellular space. The protein localises to the extracellular matrix. Negatively regulates cell proliferation and cell migration, especially in smooth muscle cells. This is Podocan (Podn) from Mus musculus (Mouse).